The following is a 341-amino-acid chain: HTH-type transcriptional repressor PurR (341 aa).

Residues 2–56 form the HTH lacI-type domain; that stretch reads ATIKDVAKRAGVSTTTVSHVINKTRFVADETKAAVWEAIKELHYSPSAVARSLKV. The segment at residues 4–23 is a DNA-binding region (H-T-H motif); the sequence is IKDVAKRAGVSTTTVSHVIN. The DNA-binding element occupies 48-56; that stretch reads SAVARSLKV. Hypoxanthine is bound by residues Tyr-73, Arg-190, Thr-192, Phe-221, and Asp-275.

As to quaternary structure, homodimer.

It participates in purine metabolism; purine nucleotide biosynthesis [regulation]. In terms of biological role, is the main repressor of the genes involved in the de novo synthesis of purine nucleotides, regulating purB, purC, purEK, purF, purHD, purL, purMN and guaBA expression. PurR is allosterically activated to bind its cognate DNA by binding the purine corepressors, hypoxanthine or guanine, thereby effecting transcription repression. The polypeptide is HTH-type transcriptional repressor PurR (Edwardsiella ictaluri (strain 93-146)).